We begin with the raw amino-acid sequence, 396 residues long: 1-deoxy-D-xylulose 5-phosphate reductoisomerase (396 aa).

6 residues coordinate NADPH: Thr10, Gly11, Ser12, Ile13, Asn38, and Asn123. Lys124 is a binding site for 1-deoxy-D-xylulose 5-phosphate. Glu125 serves as a coordination point for NADPH. A Mn(2+)-binding site is contributed by Asp149. Ser150, Glu151, Ser185, and His208 together coordinate 1-deoxy-D-xylulose 5-phosphate. Residue Glu151 participates in Mn(2+) binding. Residue Gly214 participates in NADPH binding. 1-deoxy-D-xylulose 5-phosphate contacts are provided by Ser221, Asn226, Lys227, and Glu230. Glu230 provides a ligand contact to Mn(2+).

It belongs to the DXR family. The cofactor is Mg(2+). Mn(2+) is required as a cofactor.

The enzyme catalyses 2-C-methyl-D-erythritol 4-phosphate + NADP(+) = 1-deoxy-D-xylulose 5-phosphate + NADPH + H(+). The protein operates within isoprenoid biosynthesis; isopentenyl diphosphate biosynthesis via DXP pathway; isopentenyl diphosphate from 1-deoxy-D-xylulose 5-phosphate: step 1/6. Its function is as follows. Catalyzes the NADPH-dependent rearrangement and reduction of 1-deoxy-D-xylulose-5-phosphate (DXP) to 2-C-methyl-D-erythritol 4-phosphate (MEP). The sequence is that of 1-deoxy-D-xylulose 5-phosphate reductoisomerase from Shewanella pealeana (strain ATCC 700345 / ANG-SQ1).